The primary structure comprises 511 residues: Steroid 17-alpha-hydroxylase/17,20 lyase (511 aa).

C442 contacts heme.

The protein belongs to the cytochrome P450 family. Heme serves as cofactor.

The protein localises to the endoplasmic reticulum membrane. It localises to the microsome membrane. The enzyme catalyses a C21-steroid + reduced [NADPH--hemoprotein reductase] + O2 = a 17alpha-hydroxy-C21-steroid + oxidized [NADPH--hemoprotein reductase] + H2O + H(+). The catalysed reaction is progesterone + reduced [NADPH--hemoprotein reductase] + O2 = 17alpha-hydroxyprogesterone + oxidized [NADPH--hemoprotein reductase] + H2O + H(+). It carries out the reaction pregnenolone + reduced [NADPH--hemoprotein reductase] + O2 = 17alpha-hydroxypregnenolone + oxidized [NADPH--hemoprotein reductase] + H2O + H(+). It catalyses the reaction 17alpha-hydroxyprogesterone + reduced [NADPH--hemoprotein reductase] + O2 = androst-4-ene-3,17-dione + acetate + oxidized [NADPH--hemoprotein reductase] + H2O + 2 H(+). The enzyme catalyses 17alpha-hydroxyprogesterone + reduced [NADPH--hemoprotein reductase] + O2 = 16alpha,17alpha-dihydroxyprogesterone + oxidized [NADPH--hemoprotein reductase] + H2O + H(+). The catalysed reaction is 16alpha,17alpha-dihydroxyprogesterone + reduced [NADPH--hemoprotein reductase] + O2 = 6beta,16alpha,17alpha-trihydroxyprogesterone + oxidized [NADPH--hemoprotein reductase] + H2O + H(+). It carries out the reaction 17alpha-hydroxypregnenolone + reduced [NADPH--hemoprotein reductase] + O2 = 3beta-hydroxyandrost-5-en-17-one + acetate + oxidized [NADPH--hemoprotein reductase] + H2O + 2 H(+). It catalyses the reaction 16alpha,17alpha-dihydroxypregnenolone + reduced [NADPH--hemoprotein reductase] + O2 = 3beta,16alpha-dihydroxy-androst-5-en-17-one + acetate + oxidized [NADPH--hemoprotein reductase] + H2O + 2 H(+). The enzyme catalyses 3beta-hydroxyandrost-5-en-17-one + reduced [NADPH--hemoprotein reductase] + O2 = 3beta,16alpha-dihydroxy-androst-5-en-17-one + oxidized [NADPH--hemoprotein reductase] + H2O + H(+). The catalysed reaction is androst-4-ene-3,17-dione + reduced [NADPH--hemoprotein reductase] + O2 = 16alpha-hydroxyandrost-4-ene-3,17-dione + oxidized [NADPH--hemoprotein reductase] + H2O + H(+). The protein operates within steroid hormone biosynthesis. It participates in steroid biosynthesis; glucocorticoid biosynthesis. Regulated predominantly by intracellular cAMP levels. The 17,20-lyase activity is stimulated by cytochrome b5, which acts as an allosteric effector increasing the Vmax of the lyase activity. A cytochrome P450 monooxygenase involved in corticoid and androgen biosynthesis. Catalyzes 17-alpha hydroxylation of C21 steroids, which is common for both pathways. A second oxidative step, required only for androgen synthesis, involves an acyl-carbon cleavage. The 17-alpha hydroxy intermediates, as part of adrenal glucocorticoids biosynthesis pathway, are precursors of cortisol. Hydroxylates steroid hormones, pregnenolone and progesterone to form 17-alpha hydroxy metabolites, followed by the cleavage of the C17-C20 bond to form C19 steroids, dehydroepiandrosterone (DHEA) and androstenedione. Has 16-alpha hydroxylase activity. Catalyzes 16-alpha hydroxylation of 17-alpha hydroxy pregnenolone, followed by the cleavage of the C17-C20 bond to form 16-alpha-hydroxy DHEA. Also 16-alpha hydroxylates androgens, relevant for estriol synthesis. Mechanistically, uses molecular oxygen inserting one oxygen atom into a substrate, and reducing the second into a water molecule, with two electrons provided by NADPH via cytochrome P450 reductase (CPR; NADPH-ferrihemoprotein reductase). This Mesocricetus auratus (Golden hamster) protein is Steroid 17-alpha-hydroxylase/17,20 lyase (CYP17A1).